The primary structure comprises 159 residues: Cytochrome c nitrite reductase subunit NrfH (159 aa).

The Cytoplasmic portion of the chain corresponds to 2 to 14 (SEEKSRNGPARLK). A helical; Signal-anchor for type II membrane protein transmembrane segment spans residues 15 to 33 (LVLGGATLGVVALATVAFG). Residues 34–159 (MKYTDQRPFC…PISTREVADE (126 aa)) are Periplasmic-facing. Heme is bound by residues cysteine 43, cysteine 46, methionine 49, histidine 61, and cysteine 66. Asparagine 67 contacts a menaquinol. Cysteine 69 and histidine 70 together coordinate heme. The a menaquinol site is built by lysine 82 and aspartate 89. Aspartate 89 serves as a coordination point for heme. Residues 99–100 (GD) are interaction with NrfA. Positions 116, 119, 120, 136, 139, 140, and 145 each coordinate heme. The interaction with NrfA stretch occupies residues 123-158 (TNVEVASMEAKKYCTDCHRNVQHMRMKPISTREVAD).

This sequence belongs to the NapC/NirT/NrfH family. Component of the NrfHA cytochrome c nitrite reductase complex composed of 4 NrfA catalytic subunits and 2 NrfH quinone-binding subunits. Interacts with NrfA homodimer. Heme serves as cofactor.

Its subcellular location is the cell inner membrane. Functionally, electron donor subunit of the cytochrome c nitrite reductase holocomplex NrfHA. Acquires electrons from the menaquinone pool and mediates their transfer to the catalytic subunit NrfA in an anaerobic respiratory process of nitrite. The other biological function of the NrfHA holocomplex is to detoxify nitrite. This function is essential for the survival of this organism as it enables it to overcome inhibition by nitrite, which is produced by other organisms living in the same environment. The polypeptide is Cytochrome c nitrite reductase subunit NrfH (Nitratidesulfovibrio vulgaris (strain ATCC 29579 / DSM 644 / CCUG 34227 / NCIMB 8303 / VKM B-1760 / Hildenborough) (Desulfovibrio vulgaris)).